The chain runs to 351 residues: MTVSSSVTAPPDGRMMHARLMNGDRLTQAEAAAFMHEVMEGNVSGVRLAAALAALRVRGETPEEIAGFAQAMRASAVRVQVAPREVLLDVVGTGGDGAHTFNISTTTAFVVAAAGVPVAKHGNRAASSRAGSADVLEALGVNLDAPPQLVADGVNELGIGFMFARNYHPALRHAAPVRADLAARTVFNILGPLANPAGASHLVVGVYRPELTRMLAEVLRLLGAKGATVVYGSGLDEFTVCGPNTVTGLRNGELICRTMHPEECGVSLHPKEAIVGGSPAENAEITRALLTGGGTPAQRDIVALNAGAALRTAEQVESIAQGVARAREVMASGAGWDLLQRYAAHTQRAAS.

5-phospho-alpha-D-ribose 1-diphosphate is bound by residues Gly92, 95–96 (GD), Thr100, 102–105 (NIST), 120–128 (KHGNRAASS), and Ser132. An anthranilate-binding site is contributed by Gly92. Position 104 (Ser104) interacts with Mg(2+). Asn123 serves as a coordination point for anthranilate. Arg178 is an anthranilate binding site. Positions 236 and 237 each coordinate Mg(2+).

The protein belongs to the anthranilate phosphoribosyltransferase family. Homodimer. Mg(2+) is required as a cofactor.

It carries out the reaction N-(5-phospho-beta-D-ribosyl)anthranilate + diphosphate = 5-phospho-alpha-D-ribose 1-diphosphate + anthranilate. The protein operates within amino-acid biosynthesis; L-tryptophan biosynthesis; L-tryptophan from chorismate: step 2/5. In terms of biological role, catalyzes the transfer of the phosphoribosyl group of 5-phosphorylribose-1-pyrophosphate (PRPP) to anthranilate to yield N-(5'-phosphoribosyl)-anthranilate (PRA). The sequence is that of Anthranilate phosphoribosyltransferase from Deinococcus geothermalis (strain DSM 11300 / CIP 105573 / AG-3a).